Reading from the N-terminus, the 359-residue chain is 3-dehydroquinate synthase (359 aa).

Residues 70 to 75 (DGEQYK), 105 to 109 (GVIGD), 129 to 130 (TT), Lys-142, Lys-151, and 169 to 172 (FYKT) each bind NAD(+). Zn(2+) contacts are provided by Glu-184, His-247, and His-264.

This sequence belongs to the sugar phosphate cyclases superfamily. Dehydroquinate synthase family. It depends on Co(2+) as a cofactor. Zn(2+) is required as a cofactor. NAD(+) serves as cofactor.

The protein resides in the cytoplasm. It carries out the reaction 7-phospho-2-dehydro-3-deoxy-D-arabino-heptonate = 3-dehydroquinate + phosphate. The protein operates within metabolic intermediate biosynthesis; chorismate biosynthesis; chorismate from D-erythrose 4-phosphate and phosphoenolpyruvate: step 2/7. Functionally, catalyzes the conversion of 3-deoxy-D-arabino-heptulosonate 7-phosphate (DAHP) to dehydroquinate (DHQ). The polypeptide is 3-dehydroquinate synthase (Francisella tularensis subsp. mediasiatica (strain FSC147)).